Here is a 405-residue protein sequence, read N- to C-terminus: MQEKDASSQGFLPHFQHFATQAIHVGQDPEQWTSRAVVPPISLSTTFKQGAPGQHSGFEYSRSGNPTRNCLEKAVAALDGAKYCLAFASGLAATVTITHLLKAGDQIICMDDVYGGTNRYFRQVASEFGLKISFVDCSKIKLLEAAITPETKLVWIETPTNPTQKVIDIEGCAHIVHKHGDIILVVDNTFMSPYFQRPLALGADISMYSATKYMNGHSDVVMGLVSVNCESLHNRLRFLQNSLGAVPSPIDCYLCNRGLKTLHVRMEKHFKNGMAVAQFLESNPWVEKVIYPGLPSHPQHELVKRQCTGCTGMVTFYIKGTLQHAEIFLKNLKLFTLAESLGGFESLAELPAIMTHASVLKNDRDVLGISDTLIRLSVGLEDEEDLLEDLDQALKAAHPPSGSHS.

Residues R62, Y114, and R119 each coordinate substrate. The residue at position 212 (K212) is an N6-(pyridoxal phosphate)lysine. E339 contributes to the substrate binding site.

Belongs to the trans-sulfuration enzymes family. In terms of assembly, homotetramer. Interacts with CALM in a calcium-dependent manner. It depends on pyridoxal 5'-phosphate as a cofactor. Highly expressed in liver. Also in muscle and lower expression in most tissues except heart, pituitary gland, spleen, thymus, and vascular tissue, where it is hardly detected.

The protein localises to the cytoplasm. It carries out the reaction L,L-cystathionine + H2O = 2-oxobutanoate + L-cysteine + NH4(+). It catalyses the reaction L-cysteine + H2O = hydrogen sulfide + pyruvate + NH4(+) + H(+). The catalysed reaction is L-homocysteine + H2O = 2-oxobutanoate + hydrogen sulfide + NH4(+) + H(+). The enzyme catalyses L-homoserine = 2-oxobutanoate + NH4(+). It carries out the reaction L-selenocystathionine + H2O = L-selenocysteine + 2-oxobutanoate + NH4(+). The protein operates within amino-acid biosynthesis; L-cysteine biosynthesis; L-cysteine from L-homocysteine and L-serine: step 2/2. With respect to regulation, inhibited by propargylglycine, trifluoroalanine and aminoethoxyvinylglycine. Functionally, catalyzes the last step in the trans-sulfuration pathway from L-methionine to L-cysteine in a pyridoxal-5'-phosphate (PLP)-dependent manner, which consists on cleaving the L,L-cystathionine molecule into L-cysteine, ammonia and 2-oxobutanoate. Part of the L-cysteine derived from the trans-sulfuration pathway is utilized for biosynthesis of the ubiquitous antioxidant glutathione. Besides its role in the conversion of L-cystathionine into L-cysteine, it utilizes L-cysteine and L-homocysteine as substrates (at much lower rates than L,L-cystathionine) to produce the endogenous gaseous signaling molecule hydrogen sulfide (H2S). In vitro, it converts two L-cysteine molecules into lanthionine and H2S, also two L-homocysteine molecules to homolanthionine and H2S, which can be particularly relevant under conditions of severe hyperhomocysteinemia (which is a risk factor for cardiovascular disease, diabetes, and Alzheimer's disease). Lanthionine and homolanthionine are structural homologs of L,L-cystathionine that differ by the absence or presence of an extra methylene group, respectively. Acts as a cysteine-protein sulfhydrase by mediating sulfhydration of target proteins: sulfhydration consists of converting -SH groups into -SSH on specific cysteine residues of target proteins such as GAPDH, PTPN1 and NF-kappa-B subunit RELA, thereby regulating their function. By generating the gasotransmitter H2S, it participates in a number of physiological processes such as vasodilation, bone protection, and inflammation. Plays an essential role in myogenesis by contributing to the biogenesis of H2S in skeletal muscle tissue. Can also accept homoserine as substrate. Catalyzes the elimination of selenocystathionine (which can be derived from the diet) to yield selenocysteine, ammonia and 2-oxobutanoate. In Homo sapiens (Human), this protein is Cystathionine gamma-lyase (CTH).